Reading from the N-terminus, the 118-residue chain is Small ribosomal subunit protein uS13 (118 aa).

Residues 94-118 form a disordered region; that stretch reads SLPVHGQRTKTNARTCKGPRKPIKK.

It belongs to the universal ribosomal protein uS13 family. In terms of assembly, part of the 30S ribosomal subunit. Forms a loose heterodimer with protein S19. Forms two bridges to the 50S subunit in the 70S ribosome.

Its function is as follows. Located at the top of the head of the 30S subunit, it contacts several helices of the 16S rRNA. In the 70S ribosome it contacts the 23S rRNA (bridge B1a) and protein L5 of the 50S subunit (bridge B1b), connecting the 2 subunits; these bridges are implicated in subunit movement. Contacts the tRNAs in the A and P-sites. The polypeptide is Small ribosomal subunit protein uS13 (Buchnera aphidicola subsp. Acyrthosiphon pisum (strain 5A)).